The primary structure comprises 436 residues: Mannitol-binding protein (436 aa).

The signal sequence occupies residues 1-22 (MNDSIKACLAAACLALPLLAQG).

It belongs to the bacterial solute-binding protein 1 family.

The protein localises to the periplasm. Binds mannitol with high affinity. The polypeptide is Mannitol-binding protein (Pseudomonas aeruginosa (strain ATCC 15692 / DSM 22644 / CIP 104116 / JCM 14847 / LMG 12228 / 1C / PRS 101 / PAO1)).